We begin with the raw amino-acid sequence, 595 residues long: Elongation factor 4 (595 aa).

The tr-type G domain maps to 2–184; it reads SHIRNFSIIA…RLVATIPAPT (183 aa). GTP contacts are provided by residues 14–19 and 131–134; these read DHGKST and NKMD.

This sequence belongs to the TRAFAC class translation factor GTPase superfamily. Classic translation factor GTPase family. LepA subfamily.

It localises to the cell inner membrane. It catalyses the reaction GTP + H2O = GDP + phosphate + H(+). Required for accurate and efficient protein synthesis under certain stress conditions. May act as a fidelity factor of the translation reaction, by catalyzing a one-codon backward translocation of tRNAs on improperly translocated ribosomes. Back-translocation proceeds from a post-translocation (POST) complex to a pre-translocation (PRE) complex, thus giving elongation factor G a second chance to translocate the tRNAs correctly. Binds to ribosomes in a GTP-dependent manner. The polypeptide is Elongation factor 4 (Pseudomonas savastanoi pv. phaseolicola (strain 1448A / Race 6) (Pseudomonas syringae pv. phaseolicola (strain 1448A / Race 6))).